The chain runs to 418 residues: L-rhamnose isomerase (418 aa).

The Mn(2+) site is built by His262, Asp294, and Asp296.

Belongs to the rhamnose isomerase family. Mn(2+) serves as cofactor.

It is found in the cytoplasm. It carries out the reaction L-rhamnopyranose = L-rhamnulose. Its pathway is carbohydrate degradation; L-rhamnose degradation; glycerone phosphate from L-rhamnose: step 1/3. In terms of biological role, catalyzes the interconversion of L-rhamnose and L-rhamnulose. This chain is L-rhamnose isomerase, found in Bacteroides thetaiotaomicron (strain ATCC 29148 / DSM 2079 / JCM 5827 / CCUG 10774 / NCTC 10582 / VPI-5482 / E50).